Reading from the N-terminus, the 378-residue chain is MRMKQTIPSSYVGLKINEWYTHIRQFHVAEAERVKLEVEREIEDMEEDQDLLLYYSLMEFRHRVMLDYIKPFGEDTSQLEFSELLEDIEGNQYKLTGLLEYYFNFFRGMYEFKQKMFVSAMMYYKRAEKNLALVSDDIEKAEFAFKMAEIFYNLKQTYVSMSYAVQALETYQMYETYTVRRIQCEFVIAGNYDDMQYPERALPHLELALDLAKKEGNPRLISSALYNLGNCYEKMGELQKAAEYFGKSVSICKSEKFDNLPHSIYSLTQVLYKQKNDAEAQKKYREGLEIARQYSDELFVELFQFLHALYGKNIDTESVSHTFQFLEEHMLYPYIEELAHDAAQFYIENGQPEKALSFYEKMVHAQKQIQRGDCLYEI.

TPR repeat units follow at residues Tyr101–Asp137, Ala148–Arg181, Gln183–Glu215, Ser222–Glu255, Pro261–Tyr294, and Glu336–Ile369.

This sequence belongs to the Rap family. Homodimer. Interacts with its substrate, phosphorylated Spo0F, and its inhibitor, the PhrA pentapeptide. The RapA dimer forms a stable complex with two molecules of phosphorylated Spo0F. The complex is dissociated after dephosphorylation of Spo0F by RapA. Mn(2+) is required as a cofactor.

It localises to the cytoplasm. Phosphatase activity is inhibited by the phosphatase regulator PhrA. Interaction with PhrA dissociates the RapA-Spo0F complex. Activity is abolished in the presence of EDTA. Involved in the regulation of sporulation. Acts as a phosphatase that specifically dephosphorylates the sporulation initiation phosphotransferase Spo0F and inhibits its activity. This Bacillus subtilis (strain 168) protein is Response regulator aspartate phosphatase A.